The primary structure comprises 266 residues: Gasdermin bGSDM (266 aa).

A run of 4 beta stranded transmembrane segments spans residues 67-83, 95-113, 162-179, and 187-203; these read LQQNSTVSFDGKAGVDI, KLRGNINADHINSLQISYQ, SFSVSAQNKNGQNIDLEA, and ADVNVGRSKKDEVLMEY.

The protein belongs to the bacterial gasdermin family. As to quaternary structure, monomer. Forms large, homooligomeric ring-shaped pores when inserted in membranes.

The protein localises to the cytoplasm. It is found in the cell inner membrane. With respect to regulation, the full-length protein before cleavage is inactive: intramolecular interactions between the N-terminal domain and the C-terminal region mediate autoinhibition. The pyroptosis-like-inducing activity is carried by the released N-terminal domain (Gasdermin bGSDM, N-terminus). Precursor of a pore-forming protein involved in defense against bacteriophages. Expression of bGSDM and the neighboring protease gene (Gilli_2517) is not toxic in E.coli. Cleavage of this precursor by its dedicated protease releases the active moiety (gasdermin bGSDM, N-terminus) which inserts into membranes, forming pores and triggering cell death. In terms of biological role, pore-forming protein that causes membrane permeabilization via a pyroptosis-like activity. Makes ring-like pores when released. The chain is Gasdermin bGSDM from Gillisia limnaea (strain DSM 15749 / LMG 21470 / R-8282).